The chain runs to 347 residues: GMP reductase (347 aa).

108-131 (ADFAKTAQILALNPALNFVCIDVA) lines the NADP(+) pocket. K(+)-binding residues include glycine 181 and glycine 183. The active-site Thioimidate intermediate is cysteine 186. 216-239 (IVSDGGCTMPGDVAKAFGGGADFV) is an NADP(+) binding site.

Belongs to the IMPDH/GMPR family. GuaC type 1 subfamily. In terms of assembly, homotetramer.

It catalyses the reaction IMP + NH4(+) + NADP(+) = GMP + NADPH + 2 H(+). In terms of biological role, catalyzes the irreversible NADPH-dependent deamination of GMP to IMP. It functions in the conversion of nucleobase, nucleoside and nucleotide derivatives of G to A nucleotides, and in maintaining the intracellular balance of A and G nucleotides. This Salmonella arizonae (strain ATCC BAA-731 / CDC346-86 / RSK2980) protein is GMP reductase.